Reading from the N-terminus, the 304-residue chain is Aspartate carbamoyltransferase catalytic subunit (304 aa).

Residues Arg-53 and Thr-54 each coordinate carbamoyl phosphate. Lys-82 provides a ligand contact to L-aspartate. 3 residues coordinate carbamoyl phosphate: Arg-103, His-131, and Gln-134. Positions 163 and 224 each coordinate L-aspartate. The carbamoyl phosphate site is built by Leu-263 and Pro-264.

It belongs to the aspartate/ornithine carbamoyltransferase superfamily. ATCase family. Heterooligomer of catalytic and regulatory chains.

It catalyses the reaction carbamoyl phosphate + L-aspartate = N-carbamoyl-L-aspartate + phosphate + H(+). Its pathway is pyrimidine metabolism; UMP biosynthesis via de novo pathway; (S)-dihydroorotate from bicarbonate: step 2/3. In terms of biological role, catalyzes the condensation of carbamoyl phosphate and aspartate to form carbamoyl aspartate and inorganic phosphate, the committed step in the de novo pyrimidine nucleotide biosynthesis pathway. This chain is Aspartate carbamoyltransferase catalytic subunit, found in Haloarcula marismortui (strain ATCC 43049 / DSM 3752 / JCM 8966 / VKM B-1809) (Halobacterium marismortui).